The following is a 390-amino-acid chain: tRNA(Met) cytidine acetate ligase (390 aa).

ATP contacts are provided by residues 7-20 (VVEY…HKLH), Gly101, Asn162, and Arg187.

This sequence belongs to the TmcAL family.

The protein localises to the cytoplasm. The enzyme catalyses cytidine(34) in elongator tRNA(Met) + acetate + ATP = N(4)-acetylcytidine(34) in elongator tRNA(Met) + AMP + diphosphate. Catalyzes the formation of N(4)-acetylcytidine (ac(4)C) at the wobble position of elongator tRNA(Met), using acetate and ATP as substrates. First activates an acetate ion to form acetyladenylate (Ac-AMP) and then transfers the acetyl group to tRNA to form ac(4)C34. This is tRNA(Met) cytidine acetate ligase from Listeria monocytogenes serotype 4b (strain F2365).